The sequence spans 513 residues: Putative ribose/galactose/methyl galactoside import ATP-binding protein 2 (513 aa).

ABC transporter domains are found at residues 24–260 (LAAD…VGRE) and 270–510 (VPIG…VMDL). An ATP-binding site is contributed by 56-63 (GENGAGKS).

It belongs to the ABC transporter superfamily. Carbohydrate importer 2 (CUT2) (TC 3.A.1.2) family.

Its subcellular location is the cell inner membrane. The enzyme catalyses D-ribose(out) + ATP + H2O = D-ribose(in) + ADP + phosphate + H(+). It catalyses the reaction D-galactose(out) + ATP + H2O = D-galactose(in) + ADP + phosphate + H(+). Functionally, part of an ABC transporter complex involved in carbohydrate import. Could be involved in ribose, galactose and/or methyl galactoside import. Responsible for energy coupling to the transport system. The sequence is that of Putative ribose/galactose/methyl galactoside import ATP-binding protein 2 from Agrobacterium fabrum (strain C58 / ATCC 33970) (Agrobacterium tumefaciens (strain C58)).